The chain runs to 189 residues: HGPRTase-like protein 2 (189 aa).

It belongs to the purine/pyrimidine phosphoribosyltransferase family. Archaeal HPRT subfamily.

In terms of biological role, may catalyze a purine salvage reaction, the substrate is unknown. This is HGPRTase-like protein 2 from Halalkalicoccus jeotgali (strain DSM 18796 / CECT 7217 / JCM 14584 / KCTC 4019 / B3).